A 312-amino-acid chain; its full sequence is MRPLAPDARCAPSRPGRGPWYARRPVTTPSDPPAALREPPPPARRAGKAGSGELVFTRVAGRTVLEKALARSPLKLLAPKNHGQAAWVFVASFGGGLVGGDELNLHARVGRGAAALLSTQASTKVYRSPLVSRQRLEAEVQAGGLLVAIPDPVVCFAGSRYEQDIDVALADDASLVLVDALSSGRSARGERWAFDRYASRVRVSRGGRAVLLDATRLDPAHGALPERMGRFDALATLVALGPRAASAAEALLAPRPPPERRAELVASASPLRGGGAVVRVAGTSVERVAGFLRGALAFLAGELGDDPFARKW.

A disordered region spans residues 1–50 (MRPLAPDARCAPSRPGRGPWYARRPVTTPSDPPAALREPPPPARRAGKAG).

The protein belongs to the UreD family. UreD, UreF and UreG form a complex that acts as a GTP-hydrolysis-dependent molecular chaperone, activating the urease apoprotein by helping to assemble the nickel containing metallocenter of UreC. The UreE protein probably delivers the nickel.

The protein localises to the cytoplasm. Functionally, required for maturation of urease via the functional incorporation of the urease nickel metallocenter. The protein is Urease accessory protein UreD of Sorangium cellulosum (strain So ce56) (Polyangium cellulosum (strain So ce56)).